The following is a 787-amino-acid chain: Alpha-glucosidase 2 (787 aa).

Active-site residues include Asp-407 and Glu-410. Asp-484 (proton donor) is an active-site residue.

This sequence belongs to the glycosyl hydrolase 31 family. Homohexamer.

The enzyme catalyses Hydrolysis of terminal, non-reducing (1-&gt;4)-linked alpha-D-glucose residues with release of alpha-D-glucose.. This is Alpha-glucosidase 2 from Bacillus thermoamyloliquefaciens.